Consider the following 311-residue polypeptide: Methionyl-tRNA formyltransferase (311 aa).

A (6S)-5,6,7,8-tetrahydrofolate-binding site is contributed by S110–P113.

It belongs to the Fmt family.

It carries out the reaction L-methionyl-tRNA(fMet) + (6R)-10-formyltetrahydrofolate = N-formyl-L-methionyl-tRNA(fMet) + (6S)-5,6,7,8-tetrahydrofolate + H(+). Attaches a formyl group to the free amino group of methionyl-tRNA(fMet). The formyl group appears to play a dual role in the initiator identity of N-formylmethionyl-tRNA by promoting its recognition by IF2 and preventing the misappropriation of this tRNA by the elongation apparatus. The protein is Methionyl-tRNA formyltransferase of Streptococcus pneumoniae (strain JJA).